A 338-amino-acid chain; its full sequence is Taste receptor type 2 member 39 (338 aa).

Over 1 to 30 (MLGRCFPPDTKEKQQLRMTKLCDPAESELS) the chain is Extracellular. The helical transmembrane segment at 31-51 (PFLITLILAVLLAEYLIGIIA) threads the bilayer. The Cytoplasmic segment spans residues 52–74 (NGFIMAIHAAEWVQNKAVSTSGR). Residues 75 to 95 (ILVFLSVSRIALQSLMMLEIT) form a helical membrane-spanning segment. Over 96 to 116 (ISSTSLSFYSEDAVYYAFKIS) the chain is Extracellular. Residues 117–137 (FIFLNFCSLWFAAWLSFFYFV) traverse the membrane as a helical segment. Over 138–156 (KIANFSYPLFLKLRWRITG) the chain is Cytoplasmic. A helical transmembrane segment spans residues 157 to 177 (LIPWLLWLSVFISFSHSMFCI). Topologically, residues 178 to 205 (NICTVYCNNSFPIHSSNSTKKTYLSEIN) are extracellular. N-linked (GlcNAc...) asparagine glycosylation is found at Asn185 and Asn194. Residues 206–226 (VVGLAFFFNLGIVTPLIMFIL) form a helical membrane-spanning segment. At 227-262 (TATLLILSLKRHTLHMGSNATGSNDPSMEAHMGAIK) the chain is on the cytoplasmic side. The helical transmembrane segment at 263–283 (AISYFLILYIFNAVALFIYLS) threads the bilayer. Residues 284 to 291 (NMFDINSL) are Extracellular-facing. A helical membrane pass occupies residues 292–312 (WNNLCQIIMAAYPAGHSILPI). At 313–338 (QDNPGLRRAWKRLQLRLHLYPKEWTL) the chain is on the cytoplasmic side.

It belongs to the G-protein coupled receptor T2R family.

It is found in the membrane. Functionally, receptor that may play a role in the perception of bitterness and is gustducin-linked. May play a role in sensing the chemical composition of the gastrointestinal content. The activity of this receptor may stimulate alpha gustducin, mediate PLC-beta-2 activation and lead to the gating of TRPM5. This chain is Taste receptor type 2 member 39 (TAS2R39), found in Pan paniscus (Pygmy chimpanzee).